The following is a 434-amino-acid chain: D-amino acid dehydrogenase (434 aa).

FAD is bound at residue 3–17 (VVILGSGVVGVASAW).

This sequence belongs to the DadA oxidoreductase family. It depends on FAD as a cofactor.

It catalyses the reaction a D-alpha-amino acid + A + H2O = a 2-oxocarboxylate + AH2 + NH4(+). The protein operates within amino-acid degradation; D-alanine degradation; NH(3) and pyruvate from D-alanine: step 1/1. Oxidative deamination of D-amino acids. This Yersinia enterocolitica serotype O:8 / biotype 1B (strain NCTC 13174 / 8081) protein is D-amino acid dehydrogenase.